Consider the following 284-residue polypeptide: Nucleotide-binding protein Pput_0988 (284 aa).

8–15 contacts ATP; the sequence is GRSGSGKS. Residue 60–63 coordinates GTP; sequence DARN.

The protein belongs to the RapZ-like family.

In terms of biological role, displays ATPase and GTPase activities. The protein is Nucleotide-binding protein Pput_0988 of Pseudomonas putida (strain ATCC 700007 / DSM 6899 / JCM 31910 / BCRC 17059 / LMG 24140 / F1).